Reading from the N-terminus, the 164-residue chain is UPF0304 protein Ent638_2838 (164 aa).

It belongs to the UPF0304 family.

The chain is UPF0304 protein Ent638_2838 from Enterobacter sp. (strain 638).